The following is a 307-amino-acid chain: Tyrosine recombinase XerC (307 aa).

The Core-binding (CB) domain maps to 9–95 (ETLSLAIDSF…ALRSFLDWQV (87 aa)). A Tyr recombinase domain is found at 116 to 296 (HLPKNMDVDE…DFQHLAKVYD (181 aa)). Catalysis depends on residues arginine 155, lysine 179, histidine 248, arginine 251, and histidine 274. Tyrosine 283 serves as the catalytic O-(3'-phospho-DNA)-tyrosine intermediate.

It belongs to the 'phage' integrase family. XerC subfamily. In terms of assembly, forms a cyclic heterotetrameric complex composed of two molecules of XerC and two molecules of XerD, in which XerC interacts with XerD via its C-terminal region, XerD interacts with XerC via its C-terminal region and so on.

The protein localises to the cytoplasm. Its activity is regulated as follows. FtsK may regulate the catalytic switch between XerC and XerD in the heterotetrameric complex during the two steps of the recombination process. Site-specific tyrosine recombinase, which acts by catalyzing the cutting and rejoining of the recombining DNA molecules. Binds cooperatively to specific DNA consensus sequences that are separated from XerD binding sites by a short central region, forming the heterotetrameric XerC-XerD complex that recombines DNA substrates. The complex is essential to convert dimers of the bacterial chromosome into monomers to permit their segregation at cell division. It also contributes to the segregational stability of plasmids. In the complex XerC specifically exchanges the top DNA strands. The protein is Tyrosine recombinase XerC of Proteus mirabilis.